Consider the following 266-residue polypeptide: Putative carbamate hydrolase RutD (266 aa).

It belongs to the AB hydrolase superfamily. Hydrolase RutD family.

The enzyme catalyses carbamate + 2 H(+) = NH4(+) + CO2. Its function is as follows. Involved in pyrimidine catabolism. May facilitate the hydrolysis of carbamate, a reaction that can also occur spontaneously. The protein is Putative carbamate hydrolase RutD of Enterobacter cloacae subsp. cloacae (strain ATCC 13047 / DSM 30054 / NBRC 13535 / NCTC 10005 / WDCM 00083 / NCDC 279-56).